Consider the following 1010-residue polypeptide: Translation initiation factor IF-2 (1010 aa).

Disordered stretches follow at residues 54-350 (KGLA…FEDD) and 364-420 (PSFT…RPES). Residues 57-70 (ASSTSKNSTGQRES) are compositionally biased toward polar residues. Residues 112–124 (ISPPRPPVKPLVA) show a composition bias toward pro residues. A compositionally biased stretch (polar residues) spans 145 to 155 (HSPSVKETPTE). Basic and acidic residues predominate over residues 200-258 (DRPRGEKRERGESENAPSPERRVGLAKPEKPTLNRKPDGKSPKLAEPAREVRETVELKR). A compositionally biased stretch (low complexity) spans 378 to 389 (TAKAAPPGTPTA). Residues 406–419 (KSERQEPQEEKRPE) are compositionally biased toward basic and acidic residues. The region spanning 502 to 675 (RRPPVVTIMG…LLVAEVEELV (174 aa)) is the tr-type G domain. The G1 stretch occupies residues 511-518 (GHVDHGKT). A GTP-binding site is contributed by 511–518 (GHVDHGKT). Residues 536–540 (GITQH) form a G2 region. A G3 region spans residues 561 to 564 (DTPG). GTP-binding positions include 561-565 (DTPGH) and 615-618 (NKVD). The tract at residues 615 to 618 (NKVD) is G4. Positions 651–653 (SAL) are G5.

The protein belongs to the TRAFAC class translation factor GTPase superfamily. Classic translation factor GTPase family. IF-2 subfamily.

Its subcellular location is the cytoplasm. In terms of biological role, one of the essential components for the initiation of protein synthesis. Protects formylmethionyl-tRNA from spontaneous hydrolysis and promotes its binding to the 30S ribosomal subunits. Also involved in the hydrolysis of GTP during the formation of the 70S ribosomal complex. The protein is Translation initiation factor IF-2 of Microcystis aeruginosa (strain NIES-843 / IAM M-2473).